Consider the following 543-residue polypeptide: CTP synthase (543 aa).

Residues methionine 1–isoleucine 265 are amidoligase domain. Serine 13 contributes to the CTP binding site. A UTP-binding site is contributed by serine 13. Serine 14–leucine 19 contributes to the ATP binding site. Residue tyrosine 54 participates in L-glutamine binding. Residue aspartate 71 coordinates ATP. Mg(2+)-binding residues include aspartate 71 and glutamate 139. CTP contacts are provided by residues aspartate 146–glutamate 148, lysine 186–glutamine 191, and lysine 222. Residues lysine 186–glutamine 191 and lysine 222 contribute to the UTP site. Position 238–240 (arginine 238–valine 240) interacts with ATP. Residues threonine 291–leucine 542 enclose the Glutamine amidotransferase type-1 domain. Residue glycine 353 coordinates L-glutamine. Catalysis depends on cysteine 380, which acts as the Nucleophile; for glutamine hydrolysis. L-glutamine is bound by residues phenylalanine 381 to glutamine 384, glutamate 404, and arginine 470. Active-site residues include histidine 515 and glutamate 517.

It belongs to the CTP synthase family. Homotetramer.

It carries out the reaction UTP + L-glutamine + ATP + H2O = CTP + L-glutamate + ADP + phosphate + 2 H(+). The catalysed reaction is L-glutamine + H2O = L-glutamate + NH4(+). It catalyses the reaction UTP + NH4(+) + ATP = CTP + ADP + phosphate + 2 H(+). Its pathway is pyrimidine metabolism; CTP biosynthesis via de novo pathway; CTP from UDP: step 2/2. Its activity is regulated as follows. Allosterically activated by GTP, when glutamine is the substrate; GTP has no effect on the reaction when ammonia is the substrate. The allosteric effector GTP functions by stabilizing the protein conformation that binds the tetrahedral intermediate(s) formed during glutamine hydrolysis. Inhibited by the product CTP, via allosteric rather than competitive inhibition. In terms of biological role, catalyzes the ATP-dependent amination of UTP to CTP with either L-glutamine or ammonia as the source of nitrogen. Regulates intracellular CTP levels through interactions with the four ribonucleotide triphosphates. In Rhodopseudomonas palustris (strain BisB18), this protein is CTP synthase.